Here is an 863-residue protein sequence, read N- to C-terminus: DNA mismatch repair protein MutS (863 aa).

Gly617 to Ser624 provides a ligand contact to ATP.

Belongs to the DNA mismatch repair MutS family.

In terms of biological role, this protein is involved in the repair of mismatches in DNA. It is possible that it carries out the mismatch recognition step. This protein has a weak ATPase activity. This Pseudomonas fluorescens (strain SBW25) protein is DNA mismatch repair protein MutS.